The chain runs to 130 residues: Small ribosomal subunit protein uS11 (130 aa).

This sequence belongs to the universal ribosomal protein uS11 family. Part of the 30S ribosomal subunit. Interacts with proteins S7 and S18. Binds to IF-3.

Functionally, located on the platform of the 30S subunit, it bridges several disparate RNA helices of the 16S rRNA. Forms part of the Shine-Dalgarno cleft in the 70S ribosome. The sequence is that of Small ribosomal subunit protein uS11 from Prochlorococcus marinus (strain MIT 9215).